The chain runs to 215 residues: Pyrrolidone-carboxylate peptidase (215 aa).

Catalysis depends on residues Glu80, Cys143, and His167.

The protein belongs to the peptidase C15 family. In terms of assembly, homotetramer.

It is found in the cytoplasm. The catalysed reaction is Release of an N-terminal pyroglutamyl group from a polypeptide, the second amino acid generally not being Pro.. Its function is as follows. Removes 5-oxoproline from various penultimate amino acid residues except L-proline. In Bacillus thuringiensis subsp. konkukian (strain 97-27), this protein is Pyrrolidone-carboxylate peptidase.